Here is a 234-residue protein sequence, read N- to C-terminus: Glycerol uptake facilitator protein (234 aa).

The next 6 membrane-spanning stretches (helical) occupy residues 9–29, 37–57, 61–81, 83–103, 135–155, and 159–179; these read FLGT…VVLP, GWIV…FVSG, PAYL…LPWA, VLPY…LVWL, LISE…LGLY, and AGIG…SLGG. The short motif at 65–67 is the NPA 1 element; that stretch reads NPA. An NPA 2 motif is present at residues 186–188; the sequence is NPA. A helical transmembrane segment spans residues 214 to 234; the sequence is WIPVVGPVIGAALAVLVFSLF.

The protein belongs to the MIP/aquaporin (TC 1.A.8) family.

Its subcellular location is the cell membrane. The enzyme catalyses glycerol(in) = glycerol(out). Mediates glycerol diffusion across the cytoplasmic membrane via a pore-type mechanism. The chain is Glycerol uptake facilitator protein (glpF) from Streptococcus pneumoniae serotype 4 (strain ATCC BAA-334 / TIGR4).